Consider the following 829-residue polypeptide: MGCAPSIHISERLVAEDAPSPAAPPLSSGGPRLPQGQKTAALPRTRGAGLLESELRDGSGKKVAVADVQFGPMRFHQDQLQVLLVFTKEDNQCNGFCRACEKAGFKCTVTKEAQAVLACFLDKHHDIIIIDHRNPRQLDAEALCRSIRSSKLSENTVIVGVVRRVDREELSVMPFISAGFTRRYVENPNIMACYNELLQLEFGEVRSQLKLRACNSVFTALENSEDAIEITSEDRFIQYANPAFETTMGYQSGELIGKELGEVPINEKKADLLDTINSCIRIGKEWQGIYYAKKKNGDNIQQNVKIIPVIGQGGKIRHYVSIIRVCNGNNKAEKISECVQSDTHTDNQTGKHKDRRKGSLDVKAVASRATEVSSQRRHSSMARIHSMTIEAPITKVINIINAAQESSPMPVTEALDRVLEILRTTELYSPQFGAKDDDPHANDLVGGLMSDGLRRLSGNEYVLSTKNTQMVSSNIITPISLDDVPPRIARAMENEEYWDFDIFELEAATHNRPLIYLGLKMFARFGICEFLHCSESTLRSWLQIIEANYHSSNPYHNSTHSADVLHATAYFLSKERIKETLDPIDEVAALIAATIHDVDHPGRTNSFLCNAGSELAILYNDTAVLESHHAALAFQLTTGDDKCNIFKNMERNDYRTLRQGIIDMVLATEMTKHFEHVNKFVNSINKPLATLEENGETDKNQEVINTMLRTPENRTLIKRMLIKCADVSNPCRPLQYCIEWAARISEEYFSQTDEEKQQGLPVVMPVFDRNTCSIPKSQISFIDYFITDMFDAWDAFVDLPDLMQHLDNNFKYWKGLDEMKLRNLRPPPE.

Residues 16-46 (EDAPSPAAPPLSSGGPRLPQGQKTAALPRTR) are disordered. Ser-20 carries the phosphoserine modification. The 71-residue stretch at 213–283 (ACNSVFTALE…DTINSCIRIG (71 aa)) folds into the PAS domain. Residues 287 to 329 (QGIYYAKKKNGDNIQQNVKIIPVIGQGGKIRHYVSIIRVCNGN) form the PAC domain. A disordered region spans residues 341-360 (SDTHTDNQTGKHKDRRKGSL). Position 359 is a phosphoserine; by PKA (Ser-359). Ser-386 and Ser-457 each carry phosphoserine. The tract at residues 454–461 (RRLSGNEY) is involved in RAF1-binding. Tyr-461 is modified (phosphotyrosine). The region spanning 480 to 820 (SLDDVPPRIA…KYWKGLDEMK (341 aa)) is the PDEase domain. Catalysis depends on His-556, which acts as the Proton donor. A divalent metal cation contacts are provided by His-560, His-596, Asp-597, and Asp-726.

Belongs to the cyclic nucleotide phosphodiesterase family. PDE8 subfamily. In terms of assembly, interacts with RAF1. The interaction promotes RAF1 activity. A divalent metal cation serves as cofactor. Post-translationally, phosphorylated at Ser-359 by PKA under elevated cAMP conditions, this enhances catalytic activity. As to expression, expressed in most tissues except thymus and peripheral blood leukocytes. Highest levels in testis, ovary, small intestine and colon.

It carries out the reaction 3',5'-cyclic AMP + H2O = AMP + H(+). The protein operates within purine metabolism; 3',5'-cyclic AMP degradation; AMP from 3',5'-cyclic AMP: step 1/1. Inhibited by dipyridimole. Insensitive to selective PDE inhibitors including rolipram and zaprinast as well as to the non-selective inhibitor, IBMX. Unaffected by cGMP. Its function is as follows. Hydrolyzes the second messenger cAMP, which is a key regulator of many important physiological processes. May be involved in maintaining basal levels of the cyclic nucleotide and/or in the cAMP regulation of germ cell development. Binding to RAF1 reduces RAF1 'Ser-259' inhibitory-phosphorylation and stimulates RAF1-dependent EGF-activated ERK-signaling. Protects against cell death induced by hydrogen peroxide and staurosporine. In Homo sapiens (Human), this protein is High affinity cAMP-specific and IBMX-insensitive 3',5'-cyclic phosphodiesterase 8A (PDE8A).